Here is a 206-residue protein sequence, read N- to C-terminus: Large ribosomal subunit protein uL4 (206 aa).

The disordered stretch occupies residues 48–97 (THAVKNRSLVSGGGKKPWKQKHTGRARQGSTRASQWVGGGKAMGPKPRDY). Residues 63 to 72 (KPWKQKHTGR) are compositionally biased toward basic residues.

The protein belongs to the universal ribosomal protein uL4 family. In terms of assembly, part of the 50S ribosomal subunit.

One of the primary rRNA binding proteins, this protein initially binds near the 5'-end of the 23S rRNA. It is important during the early stages of 50S assembly. It makes multiple contacts with different domains of the 23S rRNA in the assembled 50S subunit and ribosome. Its function is as follows. Forms part of the polypeptide exit tunnel. This chain is Large ribosomal subunit protein uL4, found in Anaeromyxobacter dehalogenans (strain 2CP-1 / ATCC BAA-258).